A 476-amino-acid chain; its full sequence is Inner membrane transporter YcaM (476 aa).

The Cytoplasmic segment spans residues 1-9 (MAGNVQEKQ). Residues 10–30 (LRWYNIALMSFITVWGFGNVV) form a helical membrane-spanning segment. The Periplasmic portion of the chain corresponds to 31–38 (NNYANQGL). Residues 39–59 (VVVFSWVFIFALYFTPYALIV) form a helical membrane-spanning segment. Residues 60–80 (GQLGSTFKDGKGGVSTWIKHT) lie on the Cytoplasmic side of the membrane. Residues 81–101 (MGPGLAYLAAWTYWVVHIPYL) form a helical membrane-spanning segment. The Periplasmic portion of the chain corresponds to 102 to 125 (AQKPQAILIALGWAMKGDGSLIKE). Residues 126–146 (YSVVALQGLTLVLFIFFMWVA) form a helical membrane-spanning segment. Residues 147–154 (SRGMKSLK) are Cytoplasmic-facing. A helical transmembrane segment spans residues 155–175 (IVGSVAGIAMFVMSLLYVAMA). The Periplasmic segment spans residues 176-195 (VTAPAITEVHIATTNITWET). A helical membrane pass occupies residues 196 to 216 (FIPHIDFTYITTISMLVFAVG). Residues 217–240 (GAEKISPYVNQTRNPGKEFPKGML) are Cytoplasmic-facing. A helical transmembrane segment spans residues 241–261 (CLAVMVAVCAILGSLAMGMMF). Topologically, residues 262-291 (DSRNIPDDLMTNGQYYAFQKLGEYYNMGNT) are periplasmic. The helical transmembrane segment at 292–312 (LMVIYAIANTLGQVAALVFSI) threads the bilayer. Over 313 to 343 (DAPLKVLLGDADSKYIPASLCRTNASGTPVN) the chain is Cytoplasmic. A helical transmembrane segment spans residues 344 to 364 (GYFLTLVLVAILIMLPTLGIG). At 365-375 (DMNNLYKWLLN) the chain is on the periplasmic side. Residues 376–396 (LNSVVMPLRYLWVFVAFIAVV) traverse the membrane as a helical segment. Residues 397–414 (RLAQKYKPEYVFIRNKPL) lie on the Cytoplasmic side of the membrane. The chain crosses the membrane as a helical span at residues 415–435 (AMTVGIWCFAFTAFACLTGIF). The Periplasmic segment spans residues 436–448 (PKMEAFTAEWTFQ). A helical membrane pass occupies residues 449–469 (LALNVATPFVLVGLGLIFPLL). At 470-476 (ARKANSK) the chain is on the cytoplasmic side.

The protein belongs to the amino acid-polyamine-organocation (APC) superfamily.

It is found in the cell inner membrane. The protein is Inner membrane transporter YcaM (ycaM) of Escherichia coli (strain K12).